A 252-amino-acid chain; its full sequence is Triosephosphate isomerase (252 aa).

Residue 10–12 (NWK) participates in substrate binding. The active-site Electrophile is H96. The active-site Proton acceptor is E168. Substrate-binding positions include G174, S214, and 235 to 236 (GG).

Belongs to the triosephosphate isomerase family. As to quaternary structure, homodimer.

It is found in the cytoplasm. It catalyses the reaction D-glyceraldehyde 3-phosphate = dihydroxyacetone phosphate. The protein operates within carbohydrate biosynthesis; gluconeogenesis. It participates in carbohydrate degradation; glycolysis; D-glyceraldehyde 3-phosphate from glycerone phosphate: step 1/1. Functionally, involved in the gluconeogenesis. Catalyzes stereospecifically the conversion of dihydroxyacetone phosphate (DHAP) to D-glyceraldehyde-3-phosphate (G3P). This chain is Triosephosphate isomerase, found in Lactobacillus helveticus (strain DPC 4571).